Reading from the N-terminus, the 286-residue chain is Large ribosomal subunit protein uL2 (286 aa).

2 disordered regions span residues 22–59 and 215–286; these read KELTPGYTPERSLLRPKTKTGGRNNQGKITSRHRGGGH and LGRR…KLHK. The segment covering 230–240 has biased composition (basic and acidic residues); that stretch reads DHPHGGGEGRT. Basic residues predominate over residues 255 to 286; it reads KGGRTRQKRKPSNSSIVRRRKSRRYGQLKLHK.

This sequence belongs to the universal ribosomal protein uL2 family. As to quaternary structure, part of the 50S ribosomal subunit. Forms a bridge to the 30S subunit in the 70S ribosome.

Its function is as follows. One of the primary rRNA binding proteins. Required for association of the 30S and 50S subunits to form the 70S ribosome, for tRNA binding and peptide bond formation. It has been suggested to have peptidyltransferase activity; this is somewhat controversial. Makes several contacts with the 16S rRNA in the 70S ribosome. In Rhodopirellula baltica (strain DSM 10527 / NCIMB 13988 / SH1), this protein is Large ribosomal subunit protein uL2.